The sequence spans 525 residues: Zinc finger C2HC domain-containing protein 1C (525 aa).

Residues 23–34 (AHGLHSAKHDPY) show a composition bias toward basic and acidic residues. Disordered stretches follow at residues 23–48 (AHGL…MGHL), 85–107 (CPHS…GKGL), and 145–171 (VHRK…PDSS). Positions 36-48 (QSDSPQRSSMGHL) are enriched in polar residues. Over residues 90–102 (GISQQGSGNNAQG) the composition is skewed to low complexity. Residues 207–252 (TQIQRLEAAGESLQKEIRRKEILLREKLKKTEEGLRRIQREKKQAI) adopt a coiled-coil conformation. Disordered regions lie at residues 292 to 316 (SRNR…LSDY), 330 to 349 (NNKI…SQPA), and 356 to 379 (LQAS…EQEL). Polar residues predominate over residues 301–312 (CEQAQENSSPLQ). A compositionally biased stretch (low complexity) spans 359 to 373 (SSLSGTPGSSGSSSS). 2 consecutive C2HC/C3H-type zinc fingers follow at residues 378–407 (ELGK…MQGS) and 487–516 (DYVQ…IKNR). Zn(2+) is bound by residues cysteine 382, cysteine 385, histidine 397, cysteine 401, cysteine 491, cysteine 494, histidine 506, and cysteine 510.

It belongs to the ZC2HC1 family. The cofactor is Zn(2+).

The protein is Zinc finger C2HC domain-containing protein 1C (Zc2hc1c) of Rattus norvegicus (Rat).